Consider the following 81-residue polypeptide: Small ribosomal subunit protein bS16 (81 aa).

It belongs to the bacterial ribosomal protein bS16 family.

The sequence is that of Small ribosomal subunit protein bS16 from Alkaliphilus oremlandii (strain OhILAs) (Clostridium oremlandii (strain OhILAs)).